Reading from the N-terminus, the 271-residue chain is Short-chain dehydrogenase/reductase SAT3 (271 aa).

3 residues coordinate NADP(+): serine 17, aspartate 40, and asparagine 67. Serine 153 (proton donor) is an active-site residue. The NADP(+) site is built by tyrosine 168, lysine 172, and serine 203. Tyrosine 168 functions as the Proton acceptor in the catalytic mechanism. Lysine 172 acts as the Lowers pKa of active site Tyr in catalysis.

This sequence belongs to the short-chain dehydrogenases/reductases (SDR) family.

It participates in mycotoxin biosynthesis. In terms of biological role, short-chain dehydrogenase/reductase; part of the satratoxin SC1 cluster involved in the biosynthesis of satratoxins, trichothecene mycotoxins that are associated with human food poisonings. Satratoxins are suggested to be made by products of multiple gene clusters (SC1, SC2 and SC3) that encode 21 proteins in all, including polyketide synthases, acetyltransferases, and other enzymes expected to modify the trichothecene skeleton. SC1 encodes 10 proteins, SAT1 to SAT10. The largest are SAT8, which encodes a putative polyketide synthase (PKS) with a conventional non-reducing architecture, and SAT10, a putative protein containing four ankyrin repeats and thus may be involved in protein scaffolding. The putative short-chain reductase SAT3 may assist the PKS in some capacity. SAT6 contains a secretory lipase domain and acts probably as a trichothecene esterase. SAT5 encodes a putative acetyltransferase, and so, with SAT6, may affect endogenous protection from toxicity. The probable transcription factor SAT9 may regulate the expression of the SC1 cluster. SC2 encodes proteins SAT11 to SAT16, the largest of which encodes the putative reducing PKS SAT13. SAT11 is a cytochrome P450 monooxygenase, while SAT14 and SAT16 are probable acetyltransferases. The SC2 cluster may be regulated by the transcription factor SAT15. SC3 is a small cluster that encodes 5 proteins, SAT17 to SAT21. SAT21 is a putative MFS-type transporter which may have a role in exporting secondary metabolites. The four other proteins putatively encoded in SC3 include the taurine hydroxylase-like protein SAT17, the O-methyltransferase SAT18, the acetyltransferase SAT19, and the Cys6-type zinc finger SAT20, the latter being probably involved in regulation of SC3 expression. This chain is Short-chain dehydrogenase/reductase SAT3, found in Stachybotrys chartarum (strain CBS 109288 / IBT 7711) (Toxic black mold).